Reading from the N-terminus, the 121-residue chain is NAD(P)H-quinone oxidoreductase subunit M (121 aa).

Belongs to the complex I NdhM subunit family. As to quaternary structure, NDH-1 can be composed of about 15 different subunits; different subcomplexes with different compositions have been identified which probably have different functions.

It is found in the cellular thylakoid membrane. It catalyses the reaction a plastoquinone + NADH + (n+1) H(+)(in) = a plastoquinol + NAD(+) + n H(+)(out). The enzyme catalyses a plastoquinone + NADPH + (n+1) H(+)(in) = a plastoquinol + NADP(+) + n H(+)(out). Its function is as follows. NDH-1 shuttles electrons from an unknown electron donor, via FMN and iron-sulfur (Fe-S) centers, to quinones in the respiratory and/or the photosynthetic chain. The immediate electron acceptor for the enzyme in this species is believed to be plastoquinone. Couples the redox reaction to proton translocation, and thus conserves the redox energy in a proton gradient. Cyanobacterial NDH-1 also plays a role in inorganic carbon-concentration. The polypeptide is NAD(P)H-quinone oxidoreductase subunit M (Nostoc punctiforme (strain ATCC 29133 / PCC 73102)).